Here is a 101-residue protein sequence, read N- to C-terminus: Nucleoid-associated protein Cla_0113 (101 aa).

It belongs to the YbaB/EbfC family. As to quaternary structure, homodimer.

Its subcellular location is the cytoplasm. The protein localises to the nucleoid. Binds to DNA and alters its conformation. May be involved in regulation of gene expression, nucleoid organization and DNA protection. This chain is Nucleoid-associated protein Cla_0113, found in Campylobacter lari (strain RM2100 / D67 / ATCC BAA-1060).